Here is a 231-residue protein sequence, read N- to C-terminus: Large ribosomal subunit protein uL1 (231 aa).

The protein belongs to the universal ribosomal protein uL1 family. Part of the 50S ribosomal subunit.

Binds directly to 23S rRNA. The L1 stalk is quite mobile in the ribosome, and is involved in E site tRNA release. Functionally, protein L1 is also a translational repressor protein, it controls the translation of the L11 operon by binding to its mRNA. The chain is Large ribosomal subunit protein uL1 from Pseudomonas putida (strain ATCC 700007 / DSM 6899 / JCM 31910 / BCRC 17059 / LMG 24140 / F1).